Reading from the N-terminus, the 148-residue chain is Aspartate 1-decarboxylase (148 aa).

Residue serine 25 is the Schiff-base intermediate with substrate; via pyruvic acid of the active site. Serine 25 carries the post-translational modification Pyruvic acid (Ser). Substrate is bound at residue threonine 57. The active-site Proton donor is the tyrosine 58. 73 to 75 (GAA) provides a ligand contact to substrate.

This sequence belongs to the PanD family. In terms of assembly, heterooctamer of four alpha and four beta subunits. It depends on pyruvate as a cofactor. Is synthesized initially as an inactive proenzyme, which is activated by self-cleavage at a specific serine bond to produce a beta-subunit with a hydroxyl group at its C-terminus and an alpha-subunit with a pyruvoyl group at its N-terminus.

It is found in the cytoplasm. The enzyme catalyses L-aspartate + H(+) = beta-alanine + CO2. It functions in the pathway cofactor biosynthesis; (R)-pantothenate biosynthesis; beta-alanine from L-aspartate: step 1/1. In terms of biological role, catalyzes the pyruvoyl-dependent decarboxylation of aspartate to produce beta-alanine. The protein is Aspartate 1-decarboxylase of Rhodococcus opacus (strain B4).